Here is a 93-residue protein sequence, read N- to C-terminus: OMEGA-ectatommitoxin(02)-Rm1c (93 aa).

Residues 1 to 30 (MKDSYISIVIAYLMVTFILVSSMPIEGEKG) form the signal peptide. 3 disulfides stabilise this stretch: Cys39–Cys52, Cys47–Cys68, and Cys70–Cys79. Residues 43–80 (YENYCFNGKCVHVVAQDEPGKPCYSCICDEFYIGERCG) enclose the EGF-like domain.

The protein belongs to the EGF domain peptide family. Expressed by the venom gland.

It localises to the secreted. Ant peptide with probable defensive activity which acts as a potent agonist of the mammalian epidermal growth factor receptor (EGFR). Mimics, both structurally and functionally, vertebrate epidermal growth factor (EGF) peptide hormones. In vivo, intraplantar injection in mice causes long-lasting (several days) hypersensitivity of the injected paw to both mechanical and thermal stimuli. Its long-lasting effect is unusual for venom toxins whose effects are usually immediate. One possible explanation is that it would reduce the duration of a nest attack, discourage future attacks, or enhance the actions of subsequent exposure to other pain-inducing venom peptides. The sequence is that of OMEGA-ectatommitoxin(02)-Rm1c from Rhytidoponera metallica (Australian green-headed ant).